The chain runs to 209 residues: Uracil phosphoribosyltransferase (209 aa).

5-phospho-alpha-D-ribose 1-diphosphate-binding positions include arginine 79, arginine 104, and aspartate 131–serine 139. Uracil contacts are provided by residues isoleucine 194 and glycine 199 to alanine 201. Residue aspartate 200 participates in 5-phospho-alpha-D-ribose 1-diphosphate binding.

It belongs to the UPRTase family. Mg(2+) serves as cofactor.

The catalysed reaction is UMP + diphosphate = 5-phospho-alpha-D-ribose 1-diphosphate + uracil. It functions in the pathway pyrimidine metabolism; UMP biosynthesis via salvage pathway; UMP from uracil: step 1/1. Its activity is regulated as follows. Allosterically activated by GTP. Catalyzes the conversion of uracil and 5-phospho-alpha-D-ribose 1-diphosphate (PRPP) to UMP and diphosphate. This Streptococcus agalactiae serotype III (strain NEM316) protein is Uracil phosphoribosyltransferase.